The sequence spans 175 residues: Methylated-DNA--protein-cysteine methyltransferase (175 aa).

The DNA site is built by Tyr-115 and Arg-127. The active-site Nucleophile; methyl group acceptor is the Cys-144.

It belongs to the MGMT family.

The protein resides in the nucleus. It carries out the reaction a 6-O-methyl-2'-deoxyguanosine in DNA + L-cysteinyl-[protein] = S-methyl-L-cysteinyl-[protein] + a 2'-deoxyguanosine in DNA. It catalyses the reaction a 4-O-methyl-thymidine in DNA + L-cysteinyl-[protein] = a thymidine in DNA + S-methyl-L-cysteinyl-[protein]. Involved in the cellular defense against the biological effects of O6-methylguanine (O6-MeG) and O4-methylthymine (O4-MeT) in DNA. Repairs the methylated nucleobase in DNA by stoichiometrically transferring the methyl group to a cysteine residue in the enzyme. This is a suicide reaction: the enzyme is irreversibly inactivated. The sequence is that of Methylated-DNA--protein-cysteine methyltransferase (MGT1) from Candida albicans (strain SC5314 / ATCC MYA-2876) (Yeast).